The primary structure comprises 295 residues: Probable adenylate kinase 6, chloroplastic (295 aa).

The transit peptide at 1–46 (MAVSHRLLRPATTTIKNTFSSLFIRSLSSSSSGSSLDPKIDLEEAA) directs the protein to the chloroplast. 74 to 79 (GVGKGT) is an ATP binding site. Residues 94-123 (ATGDLVREELSSSGLLSSQLKELVNHGKLV) form an NMP region. AMP is bound by residues T95, R100, 121-123 (KLV), 151-154 (GFPR), and Q158. The LID stretch occupies residues 187–235 (GRRICSECGGNYNVACIDIKGDDDTPRMYMPPLLPPPNCESKLISRADD). ATP is bound at residue R188. Residue R243 participates in AMP binding. An ATP-binding site is contributed by G271.

Belongs to the adenylate kinase family. In terms of assembly, monomer.

Its subcellular location is the plastid. The protein localises to the chloroplast. The catalysed reaction is AMP + ATP = 2 ADP. Functionally, catalyzes the reversible transfer of the terminal phosphate group between ATP and AMP. Plays an important role in cellular energy homeostasis and in adenine nucleotide metabolism. The chain is Probable adenylate kinase 6, chloroplastic from Arabidopsis thaliana (Mouse-ear cress).